Reading from the N-terminus, the 76-residue chain is Bacteriocin uberolysin (76 aa).

Positions 1 to 6 (MDILLE) are excised as a propeptide. The segment at residues 7-76 (LAGYTGIASG…RNLKAQAVIW (70 aa)) is a cross-link (cyclopeptide (Leu-Trp)).

The protein belongs to the bacteriocin class V family.

The protein resides in the secreted. Its function is as follows. Cyclopeptide antibiotic with bacteriolytic activity against most streptococci (except S.rattus and S.mutans), Listeria spp., enterococci and staphylococci. The protein is Bacteriocin uberolysin (ublA) of Streptococcus uberis.